A 542-amino-acid chain; its full sequence is CTP synthase (542 aa).

An amidoligase domain region spans residues 1 to 265 (MTKYIFVTGG…LKPISKELSL (265 aa)). Serine 13 lines the CTP pocket. Serine 13 serves as a coordination point for UTP. Residues 14-19 (SLGKGI) and aspartate 71 contribute to the ATP site. Mg(2+) contacts are provided by aspartate 71 and glutamate 139. CTP-binding positions include 146-148 (DIE), 186-191 (KSKPTQ), and lysine 222. UTP contacts are provided by residues 186–191 (KSKPTQ) and lysine 222. Positions 290-541 (VLGFVGKYLE…VEATLAISQE (252 aa)) constitute a Glutamine amidotransferase type-1 domain. Position 352 (glycine 352) interacts with L-glutamine. The active-site Nucleophile; for glutamine hydrolysis is cysteine 379. L-glutamine is bound by residues 380–383 (LGMQ), glutamate 403, and arginine 471. Active-site residues include histidine 514 and glutamate 516.

It belongs to the CTP synthase family. Homotetramer.

It carries out the reaction UTP + L-glutamine + ATP + H2O = CTP + L-glutamate + ADP + phosphate + 2 H(+). The enzyme catalyses L-glutamine + H2O = L-glutamate + NH4(+). The catalysed reaction is UTP + NH4(+) + ATP = CTP + ADP + phosphate + 2 H(+). The protein operates within pyrimidine metabolism; CTP biosynthesis via de novo pathway; CTP from UDP: step 2/2. Allosterically activated by GTP, when glutamine is the substrate; GTP has no effect on the reaction when ammonia is the substrate. The allosteric effector GTP functions by stabilizing the protein conformation that binds the tetrahedral intermediate(s) formed during glutamine hydrolysis. Inhibited by the product CTP, via allosteric rather than competitive inhibition. In terms of biological role, catalyzes the ATP-dependent amination of UTP to CTP with either L-glutamine or ammonia as the source of nitrogen. Regulates intracellular CTP levels through interactions with the four ribonucleotide triphosphates. The chain is CTP synthase from Sulfurimonas denitrificans (strain ATCC 33889 / DSM 1251) (Thiomicrospira denitrificans (strain ATCC 33889 / DSM 1251)).